Here is a 282-residue protein sequence, read N- to C-terminus: Pantothenate synthetase (282 aa).

30 to 37 (MGYLHEGH) provides a ligand contact to ATP. Histidine 37 serves as the catalytic Proton donor. Residue glutamine 61 participates in (R)-pantoate binding. Glutamine 61 serves as a coordination point for beta-alanine. Residue 147-150 (GMKD) coordinates ATP. Glutamine 153 provides a ligand contact to (R)-pantoate. ATP-binding positions include valine 176 and 184 to 187 (KSSR).

Belongs to the pantothenate synthetase family. In terms of assembly, homodimer.

The protein localises to the cytoplasm. The enzyme catalyses (R)-pantoate + beta-alanine + ATP = (R)-pantothenate + AMP + diphosphate + H(+). It participates in cofactor biosynthesis; (R)-pantothenate biosynthesis; (R)-pantothenate from (R)-pantoate and beta-alanine: step 1/1. Its function is as follows. Catalyzes the condensation of pantoate with beta-alanine in an ATP-dependent reaction via a pantoyl-adenylate intermediate. This is Pantothenate synthetase from Bacillus thuringiensis subsp. konkukian (strain 97-27).